The chain runs to 842 residues: Taste receptor type 1 member 1 (842 aa).

A signal peptide spans 1–19 (MLFWAAHLLLSLQLAVAYC). At 20-568 (WAFSCQRTES…EFLGWHEPIS (549 aa)) the chain is on the extracellular side. N-linked (GlcNAc...) asparagine glycosylation is found at Asn-88, Asn-89, Asn-96, Asn-136, Asn-292, Asn-480, and Asn-530. A helical transmembrane segment spans residues 569-589 (LVLLAANTLLLLLLIGTAGLF). Residues 590–604 (AWRLHTPVVRSAGGR) lie on the Cytoplasmic side of the membrane. Residues 605-625 (LCFLMLGSLVAGSCSLYSFFG) traverse the membrane as a helical segment. Over 626-640 (KPTVPACLLRQPLFS) the chain is Extracellular. A helical membrane pass occupies residues 641–661 (LGFAIFLSCLTIRSFQLVIIF). The Cytoplasmic portion of the chain corresponds to 662-681 (KFSTKVPTFYHTWAQNHGAG). The helical transmembrane segment at 682-702 (IFVIVSSTVHLFLCLTWLAMW) threads the bilayer. Over 703-725 (TPRPTREYQRFPHLVILECTEVN) the chain is Extracellular. The chain crosses the membrane as a helical span at residues 726–746 (SVGFLVAFAHNILLSISTFVC). The Cytoplasmic segment spans residues 747-762 (SYLGKELPENYNEAKC). Residues 763–783 (VTFSLLLHFVSWIAFFTMSSI) traverse the membrane as a helical segment. Residues 784–789 (YQGSYL) lie on the Extracellular side of the membrane. The helical transmembrane segment at 790 to 810 (PAVNVLAGLATLSGGFSGYFL) threads the bilayer. The Cytoplasmic portion of the chain corresponds to 811–842 (PKCYVILCRPELNNTEHFQASIQDYTRRCGTT).

Belongs to the G-protein coupled receptor 3 family. TAS1R subfamily. Forms heterodimers with TAS1R3. Expressed strongly only in fungiform papillae.

The protein localises to the cell membrane. In terms of biological role, putative taste receptor. TAS1R1/TAS1R3 responds to the umami taste stimulus (the taste of monosodium glutamate) and also to most of the 20 standard L-amino acids, but not to their D-enantiomers or other compounds. Sequence differences within and between species can significantly influence the selectivity and specificity of taste responses. The protein is Taste receptor type 1 member 1 (Tas1r1) of Mus musculus (Mouse).